A 132-amino-acid chain; its full sequence is MARVTVEDCIDKVDNRFELVLLASHRARQISQGAQITIDRDNDKNPVVALREIADETLSPDDLKEDLIHSLQKHVEVDEPEQDAASIAEGQLTSGSQDEDEMPETVAFDQMSEEELLAGIEGLVPPEKSDDY.

A disordered region spans residues 76-105 (EVDEPEQDAASIAEGQLTSGSQDEDEMPET).

This sequence belongs to the RNA polymerase subunit omega family. The RNAP catalytic core consists of 2 alpha, 1 beta, 1 beta' and 1 omega subunit. When a sigma factor is associated with the core the holoenzyme is formed, which can initiate transcription.

The enzyme catalyses RNA(n) + a ribonucleoside 5'-triphosphate = RNA(n+1) + diphosphate. Functionally, promotes RNA polymerase assembly. Latches the N- and C-terminal regions of the beta' subunit thereby facilitating its interaction with the beta and alpha subunits. The sequence is that of DNA-directed RNA polymerase subunit omega from Allorhizobium ampelinum (strain ATCC BAA-846 / DSM 112012 / S4) (Agrobacterium vitis (strain S4)).